Reading from the N-terminus, the 1083-residue chain is Neisserial autotransporter lipoprotein NalP (1083 aa).

The first 27 residues, M1–A27, serve as a signal peptide directing secretion. C28 carries N-palmitoyl cysteine lipidation. C28 carries the S-diacylglycerol cysteine lipid modification. The region spanning N111 to M483 is the Peptidase S8 domain. Catalysis depends on charge relay system residues D139, H211, and S427. The 275-residue stretch at D809–F1083 folds into the Autotransporter domain. Transmembrane regions (beta stranded) follow at residues R819–G828, T844–K852, T858–G866, S883–D891, Y897–R906, Q931–P941, L948–L958, V984–P994, V1000–D1010, R1041–F1052, N1057–G1066, and S1074–F1083.

The protein belongs to the peptidase S8 family. In terms of processing, a fusion protein of the first 44 residues with beta-lactamase is lipidated in E.coli, strongly suggesting this is a lipoprotein in situ. The lipidated form is briefly retained on the cell surface which allows it to process its endogenous substrates on the cell surface before the passenger domain is released into the medium.

The protein localises to the cell outer membrane. It is found in the cell surface. The protein resides in the secreted. Its function is as follows. Major human immunogenic protein. Autotransporter with a secreted protease domain involved in processing other autotransporter proteins including App and IgA. Probably autoprocesses to release the about 70 kDa passenger domain. Processes the lactoferrin receptor lipoprotein subunit (LbpB) extracellularly, releasing it from the cell surface. LbpB release protects bacteria against complement-mediated killing by anti-LbpB antibodies. Processes NHBA. Lipidation slows its auto-processing, probably allowing it to act on endogenous substrates on the cell surface before the passenger domain is released into the medium. The C-terminal beta-barrel domain inserts into the outer membrane where it probably exports the N-terminal passenger domain. Both the cell surface protein (Neisserial autotransporter lipoprotein NalP) and the passenger domain cleave human (host) complement factor C3, generating a shorter alpha chain and a longer beta chain than normal. Functionally, plays a role in extracellular-DNA (eDNA) mediated biofilm formation. In some strains (including cc32 strain H44/76 but not cc11 strain B16B6) eDNA stimulates biofilm formation. When NalP is not expressed (and no longer processes NHBA or IgA) biofilm formation increases. This is probably because the number of positively charged, DNA-binding peptides on the cell surface rises, resulting in increased biofilm formation. In terms of biological role, cleaves human (host) complement factor C3, generating a shorter alpha chain and a longer beta chain than normal. Does not act on mouse or rabbit C3. Cleavage causes C3b degradation by human CFI and CFH, decreases deposition of C3b on the bacteria surface and probably facilitates complement escape. The polypeptide is Neisserial autotransporter lipoprotein NalP (Neisseria meningitidis serogroup B / serotype 15 (strain H44/76)).